Consider the following 81-residue polypeptide: Bacteriochlorophyll c-binding protein (81 aa).

Residue His25 participates in a bacteriochlorophyll c binding.

It belongs to the BChl C/E-binding protein family.

The protein localises to the chlorosome. Its subcellular location is the chlorosome envelope. In terms of biological role, component of the photosynthetic apparatus. The light harvesting B740 complex binds bacteriochlorophyll c. This Prosthecochloris aestuarii (strain DSM 271 / SK 413) protein is Bacteriochlorophyll c-binding protein (csmA).